A 375-amino-acid polypeptide reads, in one-letter code: Growth/differentiation factor 8 (375 aa).

Residues 1 to 23 (MQKLQIYVYIYLFMLIVAGPVDL) form the signal peptide. A propeptide spanning residues 24–266 (NENSEQKENV…VTDTPKRSRR (243 aa)) is cleaved from the precursor. Asn-71 carries an N-linked (GlcNAc...) asparagine glycan. 4 disulfide bridges follow: Cys-272–Cys-282, Cys-281–Cys-340, Cys-309–Cys-372, and Cys-313–Cys-374.

The protein belongs to the TGF-beta family. In terms of assembly, homodimer; disulfide-linked. Interacts with WFIKKN2, leading to inhibit its activity. Interacts with FSTL3. Synthesized as large precursor molecule that undergoes proteolytic cleavage to generate an N-terminal propeptide and a disulfide linked C-terminal dimer, which is the biologically active molecule. The circulating form consists of a latent complex of the C-terminal dimer and other proteins, including its propeptide, which maintain the C-terminal dimer in a latent, inactive state. Ligand activation requires additional cleavage of the prodomain by a tolloid-like metalloproteinase.

It localises to the secreted. Its function is as follows. Acts specifically as a negative regulator of skeletal muscle growth. This is Growth/differentiation factor 8 (MSTN) from Sus scrofa (Pig).